The chain runs to 440 residues: Chromosome partition protein MukF (440 aa).

A leucine-zipper region spans residues 208-236 (LDETSGNLRELQDTLNAAGDKLQSQLLRI).

The protein belongs to the MukF family. Interacts, and probably forms a ternary complex, with MukE and MukB via its C-terminal region. The complex formation is stimulated by calcium or magnesium. It is required for an interaction between MukE and MukB.

It is found in the cytoplasm. The protein localises to the nucleoid. Involved in chromosome condensation, segregation and cell cycle progression. May participate in facilitating chromosome segregation by condensation DNA from both sides of a centrally located replisome during cell division. Not required for mini-F plasmid partitioning. Probably acts via its interaction with MukB and MukE. Overexpression results in anucleate cells. It has a calcium binding activity. This chain is Chromosome partition protein MukF, found in Histophilus somni (strain 129Pt) (Haemophilus somnus).